Here is a 555-residue protein sequence, read N- to C-terminus: Glutamine--tRNA ligase (555 aa).

The 'HIGH' region signature appears at 34–44 (PEPNGYLHIGH). Residues 35–37 (EPN) and 41–47 (HIGHAKS) each bind ATP. Asp67 and Tyr212 together coordinate L-glutamine. ATP contacts are provided by residues Thr231, 261 to 262 (RL), and 269 to 271 (MSK). The short motif at 268-272 (VMSKR) is the 'KMSKS' region element. The interval 317–324 (TKQDNTIE) is interaction with tRNA.

This sequence belongs to the class-I aminoacyl-tRNA synthetase family. As to quaternary structure, monomer.

The protein localises to the cytoplasm. The enzyme catalyses tRNA(Gln) + L-glutamine + ATP = L-glutaminyl-tRNA(Gln) + AMP + diphosphate. This chain is Glutamine--tRNA ligase, found in Salmonella newport (strain SL254).